Reading from the N-terminus, the 317-residue chain is Melanocyte-stimulating hormone receptor (317 aa).

At 1–37 the chain is on the extracellular side; sequence MPVLGSQRRLLGSLNCTPPATFPLTLAPNRTGPQCLE. Asn29 carries N-linked (GlcNAc...) asparagine glycosylation. Residues 38–63 traverse the membrane as a helical segment; that stretch reads VAIPDGLFLSLGLVSLVENVLVVAAI. Topologically, residues 64–72 are cytoplasmic; that stretch reads AKNRNLQSP. Residues 73 to 93 traverse the membrane as a helical segment; that stretch reads MYYFICCLAMSDLLVSVSNVL. Residues 94–118 lie on the Extracellular side of the membrane; it reads ETAVMLLLEAGALAARAAVVQQLDN. The chain crosses the membrane as a helical span at residues 119–140; sequence VIDVLICGSMVSSLCFLGAIAV. Residues 141-163 lie on the Cytoplasmic side of the membrane; it reads DRYISIFYALRYHSVVTLPRAWR. The chain crosses the membrane as a helical span at residues 164–183; that stretch reads IIAAIWVASILTSLLFITYY. Over 184 to 191 the chain is Extracellular; sequence NHTVVLLC. The chain crosses the membrane as a helical span at residues 192 to 211; it reads LVGFFIAMLALMAVLYVHML. At 212–240 the chain is on the cytoplasmic side; it reads ARACQHARGIARLQKRQRPIHQGFGLKGA. A helical membrane pass occupies residues 241-266; that stretch reads ATLTILLGVFFLCWGPFFLHLSLIVL. At 267-279 the chain is on the extracellular side; the sequence is CPQHPTCGCIFKN. The helical transmembrane segment at 280-300 threads the bilayer; it reads FNLFLALIICNAIVDPLIYAF. At 301-317 the chain is on the cytoplasmic side; it reads RSQELRKTLQEVLQCSW. Cys315 carries S-palmitoyl cysteine lipidation.

Belongs to the G-protein coupled receptor 1 family. In terms of assembly, interacts with MGRN1, but does not undergo MGRN1-mediated ubiquitination; this interaction competes with GNAS-binding and thus inhibits agonist-induced cAMP production. Interacts with OPN3; the interaction results in a decrease in MC1R-mediated cAMP signaling and ultimately a decrease in melanin production in melanocytes.

It is found in the cell membrane. Functionally, receptor for MSH (alpha, beta and gamma) and ACTH. The activity of this receptor is mediated by G proteins which activate adenylate cyclase. Mediates melanogenesis, the production of eumelanin (black/brown) and phaeomelanin (red/yellow), via regulation of cAMP signaling in melanocytes. The protein is Melanocyte-stimulating hormone receptor (MC1R) of Cervus elaphus (Red deer).